A 180-amino-acid polypeptide reads, in one-letter code: Acireductone dioxygenase (180 aa).

The Fe(2+) site is built by His88, His90, Glu94, and His133. Ni(2+) contacts are provided by His88, His90, Glu94, and His133.

This sequence belongs to the acireductone dioxygenase (ARD) family. Monomer. Interacts with MMP14. Fe(2+) is required as a cofactor. Ni(2+) serves as cofactor.

It localises to the cytoplasm. It is found in the nucleus. Its subcellular location is the cell membrane. The catalysed reaction is 1,2-dihydroxy-5-(methylsulfanyl)pent-1-en-3-one + O2 = 4-methylsulfanyl-2-oxobutanoate + formate + 2 H(+). The enzyme catalyses 1,2-dihydroxy-5-(methylsulfanyl)pent-1-en-3-one + O2 = 3-(methylsulfanyl)propanoate + CO + formate + 2 H(+). The protein operates within amino-acid biosynthesis; L-methionine biosynthesis via salvage pathway; L-methionine from S-methyl-5-thio-alpha-D-ribose 1-phosphate: step 5/6. In terms of biological role, catalyzes 2 different reactions between oxygen and the acireductone 1,2-dihydroxy-3-keto-5-methylthiopentene (DHK-MTPene) depending upon the metal bound in the active site. Fe-containing acireductone dioxygenase (Fe-ARD) produces formate and 2-keto-4-methylthiobutyrate (KMTB), the alpha-ketoacid precursor of methionine in the methionine recycle pathway. Ni-containing acireductone dioxygenase (Ni-ARD) produces methylthiopropionate, carbon monoxide and formate, and does not lie on the methionine recycle pathway. The sequence is that of Acireductone dioxygenase from Gallus gallus (Chicken).